The chain runs to 345 residues: S-adenosylmethionine:tRNA ribosyltransferase-isomerase (345 aa).

The protein belongs to the QueA family. In terms of assembly, monomer.

It localises to the cytoplasm. The catalysed reaction is 7-aminomethyl-7-carbaguanosine(34) in tRNA + S-adenosyl-L-methionine = epoxyqueuosine(34) in tRNA + adenine + L-methionine + 2 H(+). The protein operates within tRNA modification; tRNA-queuosine biosynthesis. In terms of biological role, transfers and isomerizes the ribose moiety from AdoMet to the 7-aminomethyl group of 7-deazaguanine (preQ1-tRNA) to give epoxyqueuosine (oQ-tRNA). The sequence is that of S-adenosylmethionine:tRNA ribosyltransferase-isomerase from Shewanella pealeana (strain ATCC 700345 / ANG-SQ1).